A 239-amino-acid chain; its full sequence is Dolichyldiphosphatase (239 aa).

At 1 to 34 (MNSTAAAINPNPNVIPFDDTYILYDSHDFLSFLS) the chain is on the lumenal side. The helical transmembrane segment at 35–55 (AYFSLMPILVLAFYLSWFIIT) threads the bilayer. The Cytoplasmic segment spans residues 56–131 (RELEACIVAF…KIYTSWKNLN (76 aa)). The chain crosses the membrane as a helical span at residues 132-152 (FLEKCIFSGALALLSFCVCFS). Topologically, residues 153–164 (RVYLHYHNLDQV) are lumenal. Residues 165-185 (IVGFSVGALTGSLYFFIVGII) traverse the membrane as a helical segment. The Cytoplasmic segment spans residues 186 to 239 (RELGLINWFLKLRIVRLFYMTDSYNLAPLTLKENYEAYWKRINQRSFNDKSKRD).

This sequence belongs to the dolichyldiphosphatase family.

Its subcellular location is the endoplasmic reticulum membrane. The enzyme catalyses a di-trans,poly-cis-dolichyl diphosphate + H2O = a di-trans,poly-cis-dolichyl phosphate + phosphate + H(+). Its pathway is protein modification; protein glycosylation. Its function is as follows. Non-essential protein which is required for efficient N-glycosylation. Necessary for maintaining optimal levels of dolichol-linked oligosaccharides. Hydrolyzes dolichyl pyrophosphate at a very high rate and dolichyl monophosphate at a much lower rate. Does not act on phosphatidate. The sequence is that of Dolichyldiphosphatase (CAX4) from Saccharomyces cerevisiae (strain ATCC 204508 / S288c) (Baker's yeast).